The following is a 538-amino-acid chain: Carotenoid 9,10(9',10')-cleavage dioxygenase 1 (538 aa).

Positions 222, 270, 336, and 523 each coordinate Fe cation.

This sequence belongs to the carotenoid oxygenase family. Homodimer. Requires Fe(2+) as cofactor. As to expression, high expression in flowers and siliques. Also detected in stems, leaves and roots.

The protein localises to the cytoplasm. It carries out the reaction all-trans-zeaxanthin + 2 O2 = 4,9-dimethyldodeca-2,4,6,8,10-pentaenedial + 2 (3R)-hydroxy-beta-ionone. Its function is as follows. Cleaves a variety of carotenoids symmetrically at both the 9-10 and 9'-10' double bonds. Active on beta,beta-carotene, lutein, zeaxanthin, all-trans-violaxanthin, 9-cis-violaxanthin and 9'-cis-neoxanthin. With most substrates, the carotenoid is symmetrically cleaved. Probably not involved in abscisic acid biosynthesis. The chain is Carotenoid 9,10(9',10')-cleavage dioxygenase 1 (CCD1) from Arabidopsis thaliana (Mouse-ear cress).